The chain runs to 677 residues: Transcription factor IIIB 90 kDa subunit (677 aa).

Residues 2-33 (TGRVCRGCGGTDIELDAARGDAVCTACGSVLE) form a TFIIB-type zinc finger. Residues cysteine 6, cysteine 9, cysteine 25, and cysteine 28 each coordinate Zn(2+). Repeat copies occupy residues 91-172 (RHIH…LLAR) and 185-269 (LYIP…EFED). Disordered regions lie at residues 340–368 (KGGL…TEDE) and 385–413 (LLGG…SLLD). Residue threonine 365 is modified to Phosphothreonine. Phosphoserine is present on serine 450. 2 disordered regions span residues 501–521 (YKEH…ASTA) and 544–653 (RGLS…EDGE). Serine 553 carries the phosphoserine modification. The span at 640–653 (EEADEEEPDEEDGE) shows a compositional bias: acidic residues.

The protein belongs to the TFIIB family. In terms of assembly, TFIIIB comprises at least the TATA-binding protein (TBP) and the B-related factor 1 (BRF1/TFIIIB90). Interacts with BDP1. Interacts with MAF1.

It localises to the nucleus. Its function is as follows. General activator of RNA polymerase which utilizes different TFIIIB complexes at structurally distinct promoters. The isoform 1 is involved in the transcription of tRNA, adenovirus VA1, 7SL and 5S RNA. Isoform 2 is required for transcription of the U6 promoter. The polypeptide is Transcription factor IIIB 90 kDa subunit (BRF1) (Homo sapiens (Human)).